The following is a 135-amino-acid chain: Small ribosomal subunit protein uS9 (135 aa).

Basic and acidic residues predominate over residues 108 to 118 (VGDPRRTEPHK). The segment at 108 to 135 (VGDPRRTEPHKPNRSTKGPRAKRQKSYR) is disordered. Residues 119 to 135 (PNRSTKGPRAKRQKSYR) are compositionally biased toward basic residues.

This sequence belongs to the universal ribosomal protein uS9 family.

The chain is Small ribosomal subunit protein uS9 (rps9) from Pyrococcus horikoshii (strain ATCC 700860 / DSM 12428 / JCM 9974 / NBRC 100139 / OT-3).